We begin with the raw amino-acid sequence, 33 residues long: Gaegurin-1 (33 aa).

Residues Cys27 and Cys33 are joined by a disulfide bond.

It belongs to the frog skin active peptide (FSAP) family. Brevinin subfamily. In terms of assembly, monomer. In terms of tissue distribution, expressed by the skin glands.

The protein resides in the secreted. Its function is as follows. Has a non-hemolytic activity. Has a broad spectrum of activity against both Gram-positive and Gram-negative bacteria, fungi and protozoa. The polypeptide is Gaegurin-1 (GGN1) (Glandirana rugosa (Japanese wrinkled frog)).